The following is a 108-amino-acid chain: Latartoxin-2c (108 aa).

Residues 1-19 (MKVLVITALCFILLQNVLG) form the signal peptide. The propeptide at 20 to 42 (EDTYEDLQNYIENLINENQDEAR) is removed in mature form. The Processing quadruplet motif motif lies at 39–42 (DEAR). Disulfide bonds link C44-C61, C51-C72, C60-C84, and C74-C82. At I107 the chain carries Isoleucine amide.

This sequence belongs to the neurotoxin 19 (CSTX) family. 11 (latartoxin) subfamily. Post-translationally, contains 4 disulfide bonds. In terms of processing, cleavage of the propeptide depends on the processing quadruplet motif (XXXR, with at least one of X being E). Expressed by the venom gland.

It localises to the secreted. Functionally, insect toxin. The protein is Latartoxin-2c of Lachesana tarabaevi (Spider).